Here is a 318-residue protein sequence, read N- to C-terminus: UDP-N-acetylenolpyruvoylglucosamine reductase (318 aa).

The FAD-binding PCMH-type domain maps to Ile38–Gly204. Arg182 is an active-site residue. Positions Ser212–Gly232 are disordered. Basic and acidic residues predominate over residues Leu213–Lys229. Catalysis depends on Ser233, which acts as the Proton donor. The active site involves Glu310.

It belongs to the MurB family. Requires FAD as cofactor.

Its subcellular location is the cytoplasm. The enzyme catalyses UDP-N-acetyl-alpha-D-muramate + NADP(+) = UDP-N-acetyl-3-O-(1-carboxyvinyl)-alpha-D-glucosamine + NADPH + H(+). It participates in cell wall biogenesis; peptidoglycan biosynthesis. Cell wall formation. This Leptospira borgpetersenii serovar Hardjo-bovis (strain JB197) protein is UDP-N-acetylenolpyruvoylglucosamine reductase.